A 263-amino-acid polypeptide reads, in one-letter code: Leukocyte-associated immunoglobulin-like receptor 1 (263 aa).

The N-terminal stretch at 1-21 is a signal peptide; the sequence is MPLHSVIVLVLVLCLGWKSNT. Positions 27–112 constitute an Ig-like C2-type domain; that stretch reads SDFTICAEPG…VWSQRSNDLQ (86 aa). A disulfide bridge connects residues Cys49 and Cys96. Asn87 carries N-linked (GlcNAc...) asparagine glycosylation. The chain crosses the membrane as a helical span at residues 144 to 164; sequence ILTVVSVIFLLCLSLFLFCFL. 2 consecutive short sequence motifs (ITIM motif) follow at residues 225 to 230 and 255 to 260; these read VTYAQL and STYAAI. 2 positions are modified to phosphotyrosine: Tyr227 and Tyr257.

As to quaternary structure, interacts with SH2 domains of tyrosine-protein phosphatases PTPN6 and PTPN11. The interaction with PTPN6 is constitutive. Interacts with the SH2 domain of CSK. Binds with high affinity to extracellular matrix collagens, the interaction is functionally important. In terms of processing, phosphorylation at Tyr-227 and Tyr-257 activates it. May be phosphorylated by LCK. Post-translationally, N-glycosylated. As to expression, expressed in lymphoid and non-lymphoid organs.

It is found in the membrane. Functions as an inhibitory receptor that plays a constitutive negative regulatory role on cytolytic function of natural killer (NK) cells, B-cells and T-cells. Activation by Tyr phosphorylation results in recruitment and activation of the phosphatases PTPN6 and PTPN11. It also reduces the increase of intracellular calcium evoked by B-cell receptor ligation. May also play its inhibitory role independently of SH2-containing phosphatases. Modulates cytokine production in CD4+ T-cells, down-regulating IL2 and IFNG production while inducing secretion of transforming growth factor beta. Also down-regulates IgG and IgE production in B-cells as well as IL8, IL10 and TNF secretion. Inhibits proliferation and induces apoptosis in myeloid leukemia cell lines as well as prevents nuclear translocation of NF-kappa-B p65 subunit/RELA and phosphorylation of I-kappa-B alpha/CHUK in these cells. Inhibits the differentiation of peripheral blood precursors towards dendritic cells. In Rattus norvegicus (Rat), this protein is Leukocyte-associated immunoglobulin-like receptor 1 (Lair1).